The following is a 185-amino-acid chain: Ribosome-recycling factor (185 aa).

The interval 143-163 is disordered; it reads RKDGEAGEDEVARAEKDLDKS.

The protein belongs to the RRF family.

The protein resides in the cytoplasm. Responsible for the release of ribosomes from messenger RNA at the termination of protein biosynthesis. May increase the efficiency of translation by recycling ribosomes from one round of translation to another. The protein is Ribosome-recycling factor of Mycobacterium marinum (strain ATCC BAA-535 / M).